We begin with the raw amino-acid sequence, 626 residues long: 1-deoxy-D-xylulose-5-phosphate synthase 2 (626 aa).

Thiamine diphosphate is bound by residues His74 and 115–117 (GHA). Residue Asp146 coordinates Mg(2+). Residues 147-148 (GS), Asn175, Phe286, and Glu368 contribute to the thiamine diphosphate site. A Mg(2+)-binding site is contributed by Asn175.

Belongs to the transketolase family. DXPS subfamily. Homodimer. Mg(2+) is required as a cofactor. It depends on thiamine diphosphate as a cofactor.

It carries out the reaction D-glyceraldehyde 3-phosphate + pyruvate + H(+) = 1-deoxy-D-xylulose 5-phosphate + CO2. It participates in metabolic intermediate biosynthesis; 1-deoxy-D-xylulose 5-phosphate biosynthesis; 1-deoxy-D-xylulose 5-phosphate from D-glyceraldehyde 3-phosphate and pyruvate: step 1/1. In terms of biological role, catalyzes the acyloin condensation reaction between C atoms 2 and 3 of pyruvate and glyceraldehyde 3-phosphate to yield 1-deoxy-D-xylulose-5-phosphate (DXP). The chain is 1-deoxy-D-xylulose-5-phosphate synthase 2 from Geobacter sulfurreducens (strain ATCC 51573 / DSM 12127 / PCA).